The following is a 141-amino-acid chain: Large ribosomal subunit protein uL11 (141 aa).

It belongs to the universal ribosomal protein uL11 family. As to quaternary structure, part of the ribosomal stalk of the 50S ribosomal subunit. Interacts with L10 and the large rRNA to form the base of the stalk. L10 forms an elongated spine to which L12 dimers bind in a sequential fashion forming a multimeric L10(L12)X complex. In terms of processing, one or more lysine residues are methylated.

In terms of biological role, forms part of the ribosomal stalk which helps the ribosome interact with GTP-bound translation factors. In Synechococcus elongatus (strain ATCC 33912 / PCC 7942 / FACHB-805) (Anacystis nidulans R2), this protein is Large ribosomal subunit protein uL11.